The sequence spans 311 residues: Tyrosine recombinase XerC (311 aa).

Positions 14 to 100 (ESLNETAKKF…SLRTFYKVLL (87 aa)) constitute a Core-binding (CB) domain. A Tyr recombinase domain is found at 121-303 (EVPKNFRINE…SKEKIKEVYR (183 aa)). Residues arginine 163, lysine 187, histidine 255, arginine 258, and histidine 281 contribute to the active site. Tyrosine 290 acts as the O-(3'-phospho-DNA)-tyrosine intermediate in catalysis.

Belongs to the 'phage' integrase family. XerC subfamily. As to quaternary structure, forms a cyclic heterotetrameric complex composed of two molecules of XerC and two molecules of XerD.

It is found in the cytoplasm. In terms of biological role, site-specific tyrosine recombinase, which acts by catalyzing the cutting and rejoining of the recombining DNA molecules. The XerC-XerD complex is essential to convert dimers of the bacterial chromosome into monomers to permit their segregation at cell division. It also contributes to the segregational stability of plasmids. In Leptospira interrogans serogroup Icterohaemorrhagiae serovar copenhageni (strain Fiocruz L1-130), this protein is Tyrosine recombinase XerC.